Consider the following 404-residue polypeptide: 8-amino-7-oxononanoate synthase (404 aa).

A substrate-binding site is contributed by Arg-20. Position 116 to 117 (116 to 117 (GY)) interacts with pyridoxal 5'-phosphate. His-141 contacts substrate. Residues Ser-187, His-215, and Thr-243 each coordinate pyridoxal 5'-phosphate. Residue Lys-246 is modified to N6-(pyridoxal phosphate)lysine. Thr-366 is a binding site for substrate.

This sequence belongs to the class-II pyridoxal-phosphate-dependent aminotransferase family. BioF subfamily. Homodimer. Pyridoxal 5'-phosphate is required as a cofactor.

It catalyses the reaction 6-carboxyhexanoyl-[ACP] + L-alanine + H(+) = (8S)-8-amino-7-oxononanoate + holo-[ACP] + CO2. It functions in the pathway cofactor biosynthesis; biotin biosynthesis. Catalyzes the decarboxylative condensation of pimeloyl-[acyl-carrier protein] and L-alanine to produce 8-amino-7-oxononanoate (AON), [acyl-carrier protein], and carbon dioxide. The sequence is that of 8-amino-7-oxononanoate synthase from Cupriavidus necator (strain ATCC 17699 / DSM 428 / KCTC 22496 / NCIMB 10442 / H16 / Stanier 337) (Ralstonia eutropha).